The primary structure comprises 126 residues: Holo-[acyl-carrier-protein] synthase (126 aa).

Positions 9 and 58 each coordinate Mg(2+).

It belongs to the P-Pant transferase superfamily. AcpS family. Requires Mg(2+) as cofactor.

Its subcellular location is the cytoplasm. It catalyses the reaction apo-[ACP] + CoA = holo-[ACP] + adenosine 3',5'-bisphosphate + H(+). Its function is as follows. Transfers the 4'-phosphopantetheine moiety from coenzyme A to a Ser of acyl-carrier-protein. This Vibrio vulnificus (strain CMCP6) protein is Holo-[acyl-carrier-protein] synthase.